The sequence spans 84 residues: Putative ribosomal RNA large subunit methyltransferase H 2 (84 aa).

S-adenosyl-L-methionine is bound by residues Gly-33 and 52–57 (FSKMTF).

The protein belongs to the RNA methyltransferase RlmH family. In terms of assembly, homodimer.

The protein localises to the cytoplasm. It catalyses the reaction pseudouridine(1915) in 23S rRNA + S-adenosyl-L-methionine = N(3)-methylpseudouridine(1915) in 23S rRNA + S-adenosyl-L-homocysteine + H(+). In terms of biological role, specifically methylates the pseudouridine at position 1915 (m3Psi1915) in 23S rRNA. In Clostridium perfringens (strain SM101 / Type A), this protein is Putative ribosomal RNA large subunit methyltransferase H 2 (rlmH2).